A 465-amino-acid polypeptide reads, in one-letter code: Chromosomal replication initiator protein DnaA (465 aa).

Residues methionine 1–glutamate 87 form a domain I, interacts with DnaA modulators region. The tract at residues serine 81–serine 123 is disordered. The span at glutamine 88–proline 100 shows a compositional bias: low complexity. The domain II stretch occupies residues glutamine 88–lysine 127. Residues leucine 128–serine 345 form a domain III, AAA+ region region. ATP contacts are provided by glycine 173, glycine 175, lysine 176, and threonine 177. A domain IV, binds dsDNA region spans residues arginine 346–serine 465.

The protein belongs to the DnaA family. As to quaternary structure, oligomerizes as a right-handed, spiral filament on DNA at oriC.

It is found in the cytoplasm. Its function is as follows. Plays an essential role in the initiation and regulation of chromosomal replication. ATP-DnaA binds to the origin of replication (oriC) to initiate formation of the DNA replication initiation complex once per cell cycle. Binds the DnaA box (a 9 base pair repeat at the origin) and separates the double-stranded (ds)DNA. Forms a right-handed helical filament on oriC DNA; dsDNA binds to the exterior of the filament while single-stranded (ss)DNA is stabiized in the filament's interior. The ATP-DnaA-oriC complex binds and stabilizes one strand of the AT-rich DNA unwinding element (DUE), permitting loading of DNA polymerase. After initiation quickly degrades to an ADP-DnaA complex that is not apt for DNA replication. Binds acidic phospholipids. This Acinetobacter baumannii (strain AB307-0294) protein is Chromosomal replication initiator protein DnaA.